Here is a 337-residue protein sequence, read N- to C-terminus: G-protein coupled receptor 26 (337 aa).

Residues 1–10 (MNSWDAGLAG) lie on the Extracellular side of the membrane. The chain crosses the membrane as a helical span at residues 11 to 31 (LLVGTMGVSLLSNALVLLCLL). The Cytoplasmic portion of the chain corresponds to 32 to 47 (HSADIRRQAPALFTLN). A helical transmembrane segment spans residues 48–68 (LTCGNLLCTVVNMPLTLAGVV). The Extracellular segment spans residues 69–81 (AQRQPAGDRLCRL). Cys-79 and Cys-156 are disulfide-bonded. A helical membrane pass occupies residues 82–102 (AAFLDTFLAANSMLSMAALSI). Residues 103–123 (DRWVAVVFPLSYRAKMRLRDA) are Cytoplasmic-facing. Residues 124–144 (ALMVAYTWLHALTFPAAALAL) form a helical membrane-spanning segment. Residues 145–168 (SWLGFHQLYASCTLCSRRPDERLR) are Extracellular-facing. A helical membrane pass occupies residues 169-189 (FAVFTGAFHALSFLLSFVVLC). The Cytoplasmic segment spans residues 190 to 245 (CTYLKVLKVARFHCKRIDVITMQTLVLLVDLHPSVRERCLEEQKRRRQRATKKIST). Residues 246–266 (FIGTFLVCFAPYVITRLVELF) traverse the membrane as a helical segment. Over 267-276 (STVPIGSHWG) the chain is Extracellular. Residues 277–297 (VLSKCLAYSKAASDPFVYSLL) traverse the membrane as a helical segment. The Cytoplasmic segment spans residues 298 to 337 (RHQYRKSCKEILNRLLHRRSIHSSGLTGDSHSQNILPVSE).

The protein belongs to the G-protein coupled receptor 1 family. Highly expressed in the CNS, the highest expression is seen in the amygdala, hippocampus and thalamus. Weak expression is detected in testis. Down-regulated in glioblastoma.

Its subcellular location is the cell membrane. In terms of biological role, orphan receptor. Displays a significant level of constitutive activity. Its effect is mediated by G(s)-alpha protein that stimulate adenylate cyclase, resulting in an elevation of intracellular cAMP. This is G-protein coupled receptor 26 (GPR26) from Homo sapiens (Human).